Here is a 1998-residue protein sequence, read N- to C-terminus: MLRHGALTALWITLSVVQTGVAEQVKCNFTLLESRVSSLSASIQWRTFASPCNFSLIYSSDTSGPMWCHPIRIDNFTYGCNPKDLQAGTVYNFRIVSLDGEESTLVLQTDPLPPARFEVNREKTASTTLQVRWTPSSGKVSWYEVQLFDHNNQKIQEVQVQESTTWSQYTFLNLTEGNSYKVAITAVSGEKRSFPVYINGSTVPSPVKDLGISPNPNSLLISWSRGSGNVEQYRLVLMDKGAIVQDTNVDRRDTSYAFHELTPGHLYNLTIVTMASGLQNSRWKLVRTAPMEVSNLKVTNDGRLTSLNVKWQKPPGDVDSYSITLSHQGTIKESKTLAPPVTETQFKDLVPGRLYQVTISCISGELSAEKSAAGRTVPEKVRNLVSYNEIWMKSFTVNWTPPAGDWEHYRIVLFNESLVLLNTTVGKEETHYALDGLELIPGRQYEIEVIVESGNLRNSERCQGRTVPLAVLQLRVKHANETSLGITWRAPLGEWEKYIISLMDRELLVIHKSLSKDAKEFTFTDLMPGRNYKATVTSMSGDLKQSSSIKGRTVPAQVTDLHVNNQGMTSSLFTNWTKALGDVEFYQVLLIHENVVVKNESVSSDTSRYSFRALKPGSLYSVVVTTVSGGISSRQVVAEGRTVPSSVSGVTVNNSGRNDYLSVSWLPAPGEVDHYVVSLSHEGKVDQFLIIAKSVSECSFSSLTPGRLYNVTVTTKSGNYASHSFTEERTVPDKVQGISVSNSARSDYLKVSWVHATGDFDHYEVTIKNRESFIQTKTIPKSENECEFIELVPGRLYSVTVSTKSGQYEASEQGTGRTIPEPVKDLTLLNRSTEDLHVTWSRANGDVDQYEVQLLFNDMKVFPHIHLVNTATEYKFTALTPGRHYKILVLTISGDVQQSAFIEGLTVPSTVKNIHISANGATDRLMVTWSPGGGDVDSYVVSAFRQDEKVDSQTIPKHASEHTFHRLEAGAKYRIAIVSVSGSLRNQIDALGQTVPASVQGVVAANAYSSNSLTVSWQKALGVAERYDILLLNENGLLLSNVSEPATARQHKFEDLTPGKKYKMQILTVSGGLFSKESQAEGRTVPAAVTNLRITENSSRYLSFGWTASEGELSWYNIFLYNPDRTLQERAQVDPLVQSFSFQNLLQGRMYKMVIVTHSGELSNESFIFGRTVPAAVNHLKGSHRNTTDSLWFSWSPASGDFDFYELILYNPNGTKKENWKEKDVTEWRFQGLVPGRKYTLYVVTHSGDLSNKVTGEGRTAPSPPSLLSFADVANTSLAITWKGPPDWTDYNDFELQWFPGDALTIFNPYSSRKSEGRIVYGLHPGRSYQFSVKTVSGDSWKTYSKPISGSVRTKPDKIQNLHCRPQNSTAIACSWIPPDSDFDGYSIECRKMDTQEIEFSRKLEKEKSLLNIMMLVPHKRYLVSIKVQSAGMTSEVVEDSTITMIDRPPQPPPHIRVNEKDVLISKSSINFTVNCSWFSDTNGAVKYFAVVVREADSMDELKPEQQHPLPSYLEYRHNASIRVYQTNYFASKCAESPDSSSKSFNIKLGAEMDSLGGKCDPSQQKFCDGPLKPHTAYRISIRAFTQLFDEDLKEFTKPLYSDTFFSMPITTESEPLFGVIEGVSAGLFLIGMLVALVAFFICRQKASHSRERPSARLSIRRDRPLSVHLNLGQKGNRKTSCPIKINQFEGHFMKLQADSNYLLSKEYEDLKDVGRSQSCDIALLPENRGKNRYNNILPYDASRVKLCNVDDDPCSDYINASYIPGNNFRREYIATQGPLPGTKDDFWKMAWEQNVHNIVMVTQCVEKGRVKCDHYWPADQDPLYYGDLILQMVSESVLPEWTIREFKICSEEQLDAHRLIRHFHYTVWPDHGVPETTQSLIQFVRTVRDYINRSPGAGPTVVHCSAGVGRTGTFVALDRILQQLDSKDSVDIYGAVHDLRLHRVHMVQTECQYVYLHQCVRDVLRAKKLRNEQENPLFPIYENVNPEYHRDAIYSRH.

The N-terminal stretch at 1–22 (MLRHGALTALWITLSVVQTGVA) is a signal peptide. Fibronectin type-III domains are found at residues 23–109 (EQVK…VLQT), 113–206 (PPAR…VPSP), 207–291 (VKDL…TAPM), 292–384 (EVSN…VRNL), 378–466 (PEKV…QGRT), 470–556 (AVLQ…TVPA), 557–642 (QVTD…EGRT), 643–733 (VPSS…TVPD), 734–821 (KVQG…TIPE), 822–913 (PVKD…TVKN), 908–994 (PSTV…LGQT), 995–1088 (VPAS…VPAA), 1086–1173 (PAAV…GRTV), 1176–1263 (AVNH…TAPS), 1264–1357 (PPSL…TKPD), 1358–1449 (KIQN…IDRP), and 1449–1551 (PPQP…KLGA). The Extracellular segment spans residues 23–1622 (EQVKCNFTLL…ESEPLFGVIE (1600 aa)). N-linked (GlcNAc...) asparagine glycans are attached at residues Asn-28, Asn-53, Asn-75, Asn-173, Asn-199, and Asn-268. 6 N-linked (GlcNAc...) asparagine glycosylation sites follow: Asn-415, Asn-422, Asn-480, Asn-575, Asn-599, and Asn-653. N-linked (GlcNAc...) asparagine glycosylation occurs at Asn-830. Asn-1041, Asn-1097, Asn-1164, Asn-1186, Asn-1213, Asn-1275, Asn-1368, Asn-1471, Asn-1475, and Asn-1519 each carry an N-linked (GlcNAc...) asparagine glycan. Residues 1623–1643 (GVSAGLFLIGMLVALVAFFIC) form a helical membrane-spanning segment. At 1644–1997 (RQKASHSRER…EYHRDAIYSR (354 aa)) the chain is on the cytoplasmic side. In terms of domain architecture, Tyrosine-protein phosphatase spans 1704–1964 (LSKEYEDLKD…VYLHQCVRDV (261 aa)). Substrate contacts are provided by residues Asp-1871, 1905-1911 (CSAGVGR), and Gln-1949. Cys-1905 acts as the Phosphocysteine intermediate in catalysis. Residue Tyr-1982 is modified to Phosphotyrosine.

It belongs to the protein-tyrosine phosphatase family. Receptor class 3 subfamily. As to quaternary structure, monomer. Interacts with TEK. Interacts via fibronectin type-III 17 domain with CDH5. Detected in a complex with CNTN1 and NRCAM. Interacts (phosphorylated form) with FYN and GRB2. Interacts with IGFBP2. As to expression, expression is very high in the vasculature of lung, spleen, and kidney, as well as in the heart valves, and is also present in the endothelium of arterioles and venules. Also expressed in tumor vasculature.

The protein resides in the membrane. It carries out the reaction O-phospho-L-tyrosyl-[protein] + H2O = L-tyrosyl-[protein] + phosphate. Plays an important role in blood vessel remodeling and angiogenesis. Not necessary for the initial formation of blood vessels, but is essential for their maintenance and remodeling. Can induce dephosphorylation of TEK/TIE2, CDH5/VE-cadherin and KDR/VEGFR-2. Regulates angiopoietin-TIE2 signaling in endothelial cells. Acts as a negative regulator of TIE2, and controls TIE2 driven endothelial cell proliferation, which in turn affects blood vessel remodeling during embryonic development and determines blood vessel size during perinatal growth. Essential for the maintenance of endothelial cell contact integrity and for the adhesive function of VE-cadherin in endothelial cells and this requires the presence of plakoglobin. The sequence is that of Receptor-type tyrosine-protein phosphatase beta (Ptprb) from Mus musculus (Mouse).